Consider the following 439-residue polypeptide: Damage-control phosphatase ARMT1 (439 aa).

The residue at position 2 (alanine 2) is an N-acetylalanine. Serine 4 bears the Phosphoserine mark. The residue at position 40 (lysine 40) is an N6-acetyllysine. Residues aspartate 251 and asparagine 252 each coordinate Mn(2+). 251-252 (DN) contacts substrate. 2 residues coordinate S-adenosyl-L-methionine: glutamate 256 and aspartate 289. A Mn(2+)-binding site is contributed by aspartate 289. Residues 365 to 369 (DLNYR) and lysine 402 each bind substrate. A Subfamily III RTxK motif motif is present at residues 399-402 (RTLK).

It belongs to the damage-control phosphatase family. Sugar phosphate phosphatase III subfamily. It depends on Mn(2+) as a cofactor. Ni(2+) is required as a cofactor. Post-translationally, automethylated.

The enzyme catalyses beta-D-fructose 1-phosphate + H2O = D-fructose + phosphate. It carries out the reaction beta-D-fructose 6-phosphate = dihydroxyacetone + D-glyceraldehyde 3-phosphate. The catalysed reaction is L-glutamyl-[protein] + S-adenosyl-L-methionine = [protein]-L-glutamate 5-O-methyl ester + S-adenosyl-L-homocysteine. In terms of biological role, metal-dependent phosphatase that shows phosphatase activity against several substrates, including fructose-1-phosphate and fructose-6-phosphate. Its preference for fructose-1-phosphate, a strong glycating agent that causes DNA damage rather than a canonical yeast metabolite, suggests a damage-control function in hexose phosphate metabolism. Has also been shown to have O-methyltransferase activity that methylates glutamate residues of target proteins to form gamma-glutamyl methyl ester residues. Possibly methylates PCNA, suggesting it is involved in the DNA damage response. The protein is Damage-control phosphatase ARMT1 of Rattus norvegicus (Rat).